Consider the following 647-residue polypeptide: DNA mismatch repair protein MutL (647 aa).

The interval 393 to 423 is disordered; the sequence is VSLVANKQQPTVKQAKRSADDSDSEHGKLDY. Positions 409–423 are enriched in basic and acidic residues; it reads RSADDSDSEHGKLDY.

This sequence belongs to the DNA mismatch repair MutL/HexB family.

Its function is as follows. This protein is involved in the repair of mismatches in DNA. It is required for dam-dependent methyl-directed DNA mismatch repair. May act as a 'molecular matchmaker', a protein that promotes the formation of a stable complex between two or more DNA-binding proteins in an ATP-dependent manner without itself being part of a final effector complex. The chain is DNA mismatch repair protein MutL from Streptococcus thermophilus (strain CNRZ 1066).